A 317-amino-acid chain; its full sequence is Melanocyte-stimulating hormone receptor (317 aa).

The Extracellular portion of the chain corresponds to 1–37 (MPLQGPQRRLLGSLNSTLPATPYLGLTTNQTEPPCLE). N-linked (GlcNAc...) asparagine glycosylation is present at asparagine 29. Residues 38–63 (VSIPDGLFLSLGLVSLVENVLVVTAI) form a helical membrane-spanning segment. At 64–72 (AKNRNLHSP) the chain is on the cytoplasmic side. The helical transmembrane segment at 73 to 93 (MYYFICCLAVSDLLVSMSNVL) threads the bilayer. Topologically, residues 94 to 118 (EMAILLLLEAGVLATQASVLQQLDN) are extracellular. The chain crosses the membrane as a helical span at residues 119-140 (IIDVLICGSMVSSLCFLGSIAV). Residues 141-163 (DRYISIFYALRYHSIMMLPRVWR) lie on the Cytoplasmic side of the membrane. The helical transmembrane segment at 164–183 (AIVAIWVVSVLSSTLFIAYY) threads the bilayer. The Extracellular segment spans residues 184–191 (NHTAVLLC). The chain crosses the membrane as a helical span at residues 192–211 (LVTFFVAMLVLMAVLYVHML). Over 212 to 240 (ARACQHARGIARLHKRQHPIHQGFGLKGA) the chain is Cytoplasmic. A helical transmembrane segment spans residues 241-266 (ATLTILLGVFFLCWGPFFLHLSLLIL). The Extracellular segment spans residues 267–279 (CPQHPTCGCVFKN). Residues 280–300 (FKLFLTLILCSAIVDPLIYAF) traverse the membrane as a helical segment. At 301-317 (RSQELRKTLQEVLLCSW) the chain is on the cytoplasmic side. Cysteine 315 carries the S-palmitoyl cysteine lipid modification.

It belongs to the G-protein coupled receptor 1 family. In terms of assembly, interacts with MGRN1, but does not undergo MGRN1-mediated ubiquitination; this interaction competes with GNAS-binding and thus inhibits agonist-induced cAMP production. Interacts with OPN3; the interaction results in a decrease in MC1R-mediated cAMP signaling and ultimately a decrease in melanin production in melanocytes.

The protein localises to the cell membrane. Receptor for MSH (alpha, beta and gamma) and ACTH. The activity of this receptor is mediated by G proteins which activate adenylate cyclase. Mediates melanogenesis, the production of eumelanin (black/brown) and phaeomelanin (red/yellow), via regulation of cAMP signaling in melanocytes. The polypeptide is Melanocyte-stimulating hormone receptor (MC1R) (Equus caballus (Horse)).